Reading from the N-terminus, the 576-residue chain is RING finger and SPRY domain-containing protein 1 (576 aa).

The first 16 residues, 1 to 16 (MIVLGWAVFLASRSLG), serve as a signal peptide directing secretion. A Phosphoserine modification is found at Ser50. The tract at residues 50 to 99 (SGTDDSVDTQQQQAENSAVPTADTRSQPRDPVRPPRRGRGPHEPRRKKQN) is disordered. A compositionally biased stretch (polar residues) spans 57–68 (DTQQQQAENSAV). Residues 83 to 97 (PPRRGRGPHEPRRKK) show a composition bias toward basic residues. In terms of domain architecture, B30.2/SPRY spans 300 to 483 (LFLKEGRQLT…CEFNFGAKPF (184 aa)). N-linked (GlcNAc...) asparagine glycosylation is present at Asn314. Residues 527–562 (CSLCCDEVADTQLKPCGHSDLCMDCALQLETCPLCR) form an RING-type zinc finger.

Its subcellular location is the secreted. In Macaca fascicularis (Crab-eating macaque), this protein is RING finger and SPRY domain-containing protein 1 (RSPRY1).